The sequence spans 351 residues: uncharacterized protein (351 aa).

Mn(2+) is bound by residues D215, D226, H290, E319, and E333.

It belongs to the peptidase M24B family. It depends on Mn(2+) as a cofactor.

This is an uncharacterized protein from Staphylococcus aureus (strain MW2).